A 237-amino-acid polypeptide reads, in one-letter code: Ribonuclease PH (237 aa).

Phosphate-binding positions include R86 and 124–126; that span reads GTR.

Belongs to the RNase PH family. In terms of assembly, homohexameric ring arranged as a trimer of dimers.

It carries out the reaction tRNA(n+1) + phosphate = tRNA(n) + a ribonucleoside 5'-diphosphate. Phosphorolytic 3'-5' exoribonuclease that plays an important role in tRNA 3'-end maturation. Removes nucleotide residues following the 3'-CCA terminus of tRNAs; can also add nucleotides to the ends of RNA molecules by using nucleoside diphosphates as substrates, but this may not be physiologically important. Probably plays a role in initiation of 16S rRNA degradation (leading to ribosome degradation) during starvation. The sequence is that of Ribonuclease PH from Nitrobacter hamburgensis (strain DSM 10229 / NCIMB 13809 / X14).